A 122-amino-acid polypeptide reads, in one-letter code: Large ribosomal subunit protein uL14 (122 aa).

The protein belongs to the universal ribosomal protein uL14 family. Part of the 50S ribosomal subunit. Forms a cluster with proteins L3 and L19. In the 70S ribosome, L14 and L19 interact and together make contacts with the 16S rRNA in bridges B5 and B8.

Its function is as follows. Binds to 23S rRNA. Forms part of two intersubunit bridges in the 70S ribosome. This Shewanella sp. (strain ANA-3) protein is Large ribosomal subunit protein uL14.